Here is a 20-residue protein sequence, read N- to C-terminus: Antifungal protein (20 aa).

This sequence belongs to the protease inhibitor I3 (leguminous Kunitz-type inhibitor) family.

In terms of biological role, inhibits soybean trypsin. Has antifungal activity against R.cerealis, A.brassicae and A.niger, and weak antifungal activity against F.oxysporum. This is Antifungal protein from Cullen corylifolium (Malaysian scurfpea).